Consider the following 498-residue polypeptide: ATP synthase subunit beta, chloroplastic (498 aa).

172-179 serves as a coordination point for ATP; sequence GGAGVGKT.

It belongs to the ATPase alpha/beta chains family. In terms of assembly, F-type ATPases have 2 components, CF(1) - the catalytic core - and CF(0) - the membrane proton channel. CF(1) has five subunits: alpha(3), beta(3), gamma(1), delta(1), epsilon(1). CF(0) has four main subunits: a(1), b(1), b'(1) and c(9-12).

The protein localises to the plastid. The protein resides in the chloroplast thylakoid membrane. The catalysed reaction is ATP + H2O + 4 H(+)(in) = ADP + phosphate + 5 H(+)(out). Functionally, produces ATP from ADP in the presence of a proton gradient across the membrane. The catalytic sites are hosted primarily by the beta subunits. The sequence is that of ATP synthase subunit beta, chloroplastic from Cinnamomum camphora (Camphor tree).